Reading from the N-terminus, the 359-residue chain is Heat-inducible transcription repressor HrcA (359 aa).

It belongs to the HrcA family.

In terms of biological role, negative regulator of class I heat shock genes (grpE-dnaK-dnaJ and groELS operons). Prevents heat-shock induction of these operons. The protein is Heat-inducible transcription repressor HrcA of Roseiflexus sp. (strain RS-1).